The following is a 347-amino-acid chain: Probable dual-specificity RNA methyltransferase RlmN (347 aa).

Residue Glu-90 is the Proton acceptor of the active site. In terms of domain architecture, Radical SAM core spans 96 to 326 (YKHGNSICIS…VTVRREMGSD (231 aa)). A disulfide bridge links Cys-103 with Cys-331. [4Fe-4S] cluster-binding residues include Cys-110, Cys-114, and Cys-117. S-adenosyl-L-methionine is bound by residues 157–158 (GE), Ser-189, 212–214 (SLH), and Asn-288. Residue Cys-331 is the S-methylcysteine intermediate of the active site.

It belongs to the radical SAM superfamily. RlmN family. [4Fe-4S] cluster is required as a cofactor.

It is found in the cytoplasm. It carries out the reaction adenosine(2503) in 23S rRNA + 2 reduced [2Fe-2S]-[ferredoxin] + 2 S-adenosyl-L-methionine = 2-methyladenosine(2503) in 23S rRNA + 5'-deoxyadenosine + L-methionine + 2 oxidized [2Fe-2S]-[ferredoxin] + S-adenosyl-L-homocysteine. It catalyses the reaction adenosine(37) in tRNA + 2 reduced [2Fe-2S]-[ferredoxin] + 2 S-adenosyl-L-methionine = 2-methyladenosine(37) in tRNA + 5'-deoxyadenosine + L-methionine + 2 oxidized [2Fe-2S]-[ferredoxin] + S-adenosyl-L-homocysteine. Functionally, specifically methylates position 2 of adenine 2503 in 23S rRNA and position 2 of adenine 37 in tRNAs. The polypeptide is Probable dual-specificity RNA methyltransferase RlmN (Clostridium botulinum (strain Eklund 17B / Type B)).